Reading from the N-terminus, the 89-residue chain is Small ribosomal subunit protein uS15 (89 aa).

It belongs to the universal ribosomal protein uS15 family. As to quaternary structure, part of the 30S ribosomal subunit. Forms a bridge to the 50S subunit in the 70S ribosome, contacting the 23S rRNA.

In terms of biological role, one of the primary rRNA binding proteins, it binds directly to 16S rRNA where it helps nucleate assembly of the platform of the 30S subunit by binding and bridging several RNA helices of the 16S rRNA. Its function is as follows. Forms an intersubunit bridge (bridge B4) with the 23S rRNA of the 50S subunit in the ribosome. In Mesorhizobium japonicum (strain LMG 29417 / CECT 9101 / MAFF 303099) (Mesorhizobium loti (strain MAFF 303099)), this protein is Small ribosomal subunit protein uS15.